Consider the following 405-residue polypeptide: Glutathione S-transferase LANCL1 (405 aa).

C282 serves as a coordination point for Zn(2+). K323 is a binding site for glutathione. Residues C328 and H329 each contribute to the Zn(2+) site. 370 to 373 (RTPD) serves as a coordination point for glutathione.

The protein belongs to the LanC-like protein family.

It localises to the cytoplasm. Its subcellular location is the cell membrane. The catalysed reaction is RX + glutathione = an S-substituted glutathione + a halide anion + H(+). The enzyme catalyses 1-chloro-2,4-dinitrobenzene + glutathione = 2,4-dinitrophenyl-S-glutathione + chloride + H(+). Its function is as follows. Functions as a glutathione transferase. Catalyzes conjugation of the glutathione (GSH) to artificial substrates 1-chloro-2,4-dinitrobenzene (CDNB) and p-nitrophenyl acetate. Binds glutathione. The polypeptide is Glutathione S-transferase LANCL1 (Danio rerio (Zebrafish)).